The chain runs to 353 residues: UDP-N-acetylglucosamine--N-acetylmuramyl-(pentapeptide) pyrophosphoryl-undecaprenol N-acetylglucosamine transferase (353 aa).

Residues 10 to 12 (TGG), Asn-124, Ser-183, and Gln-283 contribute to the UDP-N-acetyl-alpha-D-glucosamine site.

This sequence belongs to the glycosyltransferase 28 family. MurG subfamily.

Its subcellular location is the cell inner membrane. It carries out the reaction di-trans,octa-cis-undecaprenyl diphospho-N-acetyl-alpha-D-muramoyl-L-alanyl-D-glutamyl-meso-2,6-diaminopimeloyl-D-alanyl-D-alanine + UDP-N-acetyl-alpha-D-glucosamine = di-trans,octa-cis-undecaprenyl diphospho-[N-acetyl-alpha-D-glucosaminyl-(1-&gt;4)]-N-acetyl-alpha-D-muramoyl-L-alanyl-D-glutamyl-meso-2,6-diaminopimeloyl-D-alanyl-D-alanine + UDP + H(+). It functions in the pathway cell wall biogenesis; peptidoglycan biosynthesis. Its function is as follows. Cell wall formation. Catalyzes the transfer of a GlcNAc subunit on undecaprenyl-pyrophosphoryl-MurNAc-pentapeptide (lipid intermediate I) to form undecaprenyl-pyrophosphoryl-MurNAc-(pentapeptide)GlcNAc (lipid intermediate II). This is UDP-N-acetylglucosamine--N-acetylmuramyl-(pentapeptide) pyrophosphoryl-undecaprenol N-acetylglucosamine transferase from Helicobacter pylori (strain Shi470).